A 475-amino-acid chain; its full sequence is Sulfate adenylyltransferase subunit 1 (475 aa).

The tr-type G domain maps to 25–239 (KSLLRFLTCG…EVLETVEIQR (215 aa)). A G1 region spans residues 34–41 (GSVDDGKS). 34–41 (GSVDDGKS) serves as a coordination point for GTP. The G2 stretch occupies residues 92-96 (GITID). The G3 stretch occupies residues 113–116 (DTPG). Residues 113-117 (DTPGH) and 168-171 (NKMD) each bind GTP. Positions 168-171 (NKMD) are G4. The segment at 206 to 208 (SAL) is G5.

It belongs to the TRAFAC class translation factor GTPase superfamily. Classic translation factor GTPase family. CysN/NodQ subfamily. In terms of assembly, heterodimer composed of CysD, the smaller subunit, and CysN.

It carries out the reaction sulfate + ATP + H(+) = adenosine 5'-phosphosulfate + diphosphate. The protein operates within sulfur metabolism; hydrogen sulfide biosynthesis; sulfite from sulfate: step 1/3. In terms of biological role, with CysD forms the ATP sulfurylase (ATPS) that catalyzes the adenylation of sulfate producing adenosine 5'-phosphosulfate (APS) and diphosphate, the first enzymatic step in sulfur assimilation pathway. APS synthesis involves the formation of a high-energy phosphoric-sulfuric acid anhydride bond driven by GTP hydrolysis by CysN coupled to ATP hydrolysis by CysD. The protein is Sulfate adenylyltransferase subunit 1 of Escherichia fergusonii (strain ATCC 35469 / DSM 13698 / CCUG 18766 / IAM 14443 / JCM 21226 / LMG 7866 / NBRC 102419 / NCTC 12128 / CDC 0568-73).